Reading from the N-terminus, the 444-residue chain is Tubulin beta-2 chain (444 aa).

GTP is bound by residues Gln-11, Glu-69, Ser-138, Gly-142, Thr-143, Gly-144, Asn-204, and Asn-226. Glu-69 is a Mg(2+) binding site. The interval Tyr-422–Asp-444 is disordered. Over residues Thr-429 to Asp-444 the composition is skewed to acidic residues.

This sequence belongs to the tubulin family. As to quaternary structure, dimer of alpha and beta chains. A typical microtubule is a hollow water-filled tube with an outer diameter of 25 nm and an inner diameter of 15 nM. Alpha-beta heterodimers associate head-to-tail to form protofilaments running lengthwise along the microtubule wall with the beta-tubulin subunit facing the microtubule plus end conferring a structural polarity. Microtubules usually have 13 protofilaments but different protofilament numbers can be found in some organisms and specialized cells. The cofactor is Mg(2+). Found in areas of rapidly dividing tissues.

The protein resides in the cytoplasm. Its subcellular location is the cytoskeleton. In terms of biological role, tubulin is the major constituent of microtubules, a cylinder consisting of laterally associated linear protofilaments composed of alpha- and beta-tubulin heterodimers. Microtubules grow by the addition of GTP-tubulin dimers to the microtubule end, where a stabilizing cap forms. Below the cap, tubulin dimers are in GDP-bound state, owing to GTPase activity of alpha-tubulin. In Daucus carota (Wild carrot), this protein is Tubulin beta-2 chain (TUBB2).